Consider the following 702-residue polypeptide: Sodium/hydrogen exchanger 6 (702 aa).

A run of 12 helical transmembrane segments spans residues 72–92, 104–124, 177–197, 212–232, 253–273, 279–299, 325–345, 373–393, 415–435, 437–457, 480–500, and 516–536; these read SANLLIFILLLTLTILTIWLF, GLAMIYGLLVGLVLRYGIHVP, VTFDPEVFFNILLPPIIFYAG, ILAYAFLGTAISCFVIGSIMY, CLLFGAIVSATDPVTVLAIFH, VELYALLFGESVLNDAVAIVL, IGIFLGIFSGSFAMGAATGVV, TFLLAEAWGFTGVVAVLFCGI, FELLNFLAENFIFSYMGLTLF, FQNHVFNPTFVVGAFIAIFLG, NFQHMMMFAGLRGAMAFALAI, and LLIVFFTVWVFGGGTTAMLSC.

The protein belongs to the monovalent cation:proton antiporter 1 (CPA1) transporter (TC 2.A.36) family. In terms of assembly, homodimer. Interacts with RACK1; regulates the distribution of SLC9A6 between endosomes and the plasma membrane. Ubiquitinated (in vitro). In terms of processing, glycosylated.

Its subcellular location is the endosome membrane. The protein resides in the recycling endosome membrane. The protein localises to the early endosome membrane. It localises to the late endosome membrane. It is found in the cell membrane. The catalysed reaction is Na(+)(in) + H(+)(out) = Na(+)(out) + H(+)(in). It catalyses the reaction K(+)(in) + H(+)(out) = K(+)(out) + H(+)(in). In terms of biological role, endosomal Na(+), K(+)/H(+) antiporter. Mediates the electroneutral exchange of endosomal luminal H(+) for a cytosolic Na(+) or K(+). By facilitating proton efflux, SLC9A6 counteracts the acidity generated by vacuolar (V)-ATPase, thereby limiting luminal acidification. Responsible for alkalizing and maintaining the endosomal pH, and consequently in, e.g., endosome maturation and trafficking of recycling endosomal cargo. Plays a critical role during neurodevelopment by regulating synaptic development and plasticity. Implicated in the maintenance of cell polarity in a manner that is dependent on its ability to modulate intravesicular pH. Regulates intracelular pH in some specialized cells, osteoclasts and stereocilia where this transporter localizes to the plasma membrane. This Mus musculus (Mouse) protein is Sodium/hydrogen exchanger 6 (Slc9a6).